We begin with the raw amino-acid sequence, 292 residues long: Diaminopimelate epimerase (292 aa).

2 residues coordinate substrate: Asn-14 and Asn-78. Cys-87 (proton donor) is an active-site residue. Substrate-binding positions include Gly-88–Asn-89, Asn-164, Asn-197, and Glu-221–Arg-222. Catalysis depends on Cys-230, which acts as the Proton acceptor. Gly-231–Thr-232 is a substrate binding site.

Belongs to the diaminopimelate epimerase family. As to quaternary structure, homodimer.

The protein resides in the cytoplasm. It carries out the reaction (2S,6S)-2,6-diaminopimelate = meso-2,6-diaminopimelate. It participates in amino-acid biosynthesis; L-lysine biosynthesis via DAP pathway; DL-2,6-diaminopimelate from LL-2,6-diaminopimelate: step 1/1. Its function is as follows. Catalyzes the stereoinversion of LL-2,6-diaminopimelate (L,L-DAP) to meso-diaminopimelate (meso-DAP), a precursor of L-lysine and an essential component of the bacterial peptidoglycan. The sequence is that of Diaminopimelate epimerase from Leifsonia xyli subsp. xyli (strain CTCB07).